Reading from the N-terminus, the 497-residue chain is Cysteine-rich secretory protein LCCL domain-containing 2 (497 aa).

Residues 1–22 (MSCVLGGVIPLGLLFLVCGSQG) form the signal peptide. Asparagine 27 carries N-linked (GlcNAc...) asparagine glycosylation. Residues 62 to 200 (LHNKLRGQVQ…ENAVYFVCNY (139 aa)) enclose the SCP domain. LCCL domains lie at 284–379 (MTQV…SSSF) and 385–488 (KVQD…RDGK). Intrachain disulfides connect cysteine 290-cysteine 308, cysteine 312-cysteine 332, cysteine 391-cysteine 413, and cysteine 417-cysteine 440.

It belongs to the CRISP family. Binds to heparin, dermatan sulfate and chondroitin sulfate.

Its subcellular location is the secreted. Promotes matrix assembly. The protein is Cysteine-rich secretory protein LCCL domain-containing 2 (CRISPLD2) of Homo sapiens (Human).